The following is a 124-amino-acid chain: Tax1-binding protein 3 (124 aa).

Ser-2 is subject to N-acetylserine. The PDZ domain maps to 15-112 (RVEIHKLRQG…EVVRLLVTRQ (98 aa)). Ser-61 is subject to Phosphoserine.

As to quaternary structure, interacts (via its PDZ domain) with GLS2. Interacts (via its PDZ domain) with RTKN (via the C-terminal region); this interaction facilitates Rho-mediated activation of the FOS serum response element (SRE). Interacts (via PDZ domain) with ARHGEF16. Interacts (via PDZ domain) with KCNJ4 (via C-terminus). Competes with LIN7A for KCNJ4 binding. Interacts (via its PDZ domain) with CTNNB1; this interaction inhibits the transcriptional activity of CTNNB1. Interacts with ADGRB2.

The protein localises to the cytoplasm. The protein resides in the nucleus. It is found in the cell membrane. May regulate a number of protein-protein interactions by competing for PDZ domain binding sites. Binds CTNNB1 and may thereby act as an inhibitor of the Wnt signaling pathway. Competes with LIN7A for KCNJ4 binding, and thereby promotes KCNJ4 internalization. May play a role in the Rho signaling pathway. This chain is Tax1-binding protein 3, found in Mus musculus (Mouse).